Reading from the N-terminus, the 207-residue chain is Transcriptional regulator YqjI (207 aa).

Positions 1–40 (MSHHHEGCCKHEGQPRHEGCCKGEKSEHEHCGHGHQHEHG) are enriched in basic and acidic residues. The disordered stretch occupies residues 1 to 46 (MSHHHEGCCKHEGQPRHEGCCKGEKSEHEHCGHGHQHEHGQCCGGR).

Oligomer (probable predominant form) and monomer.

With respect to regulation, divalent metals such as nickel and iron have a similar negative effect on YqjI DNA-binding activity. Represses the expression of YqjH which is involved in iron homeostasis under excess nickel conditions. Also represses its own expression. The sequence is that of Transcriptional regulator YqjI (yqjI) from Escherichia coli (strain K12).